Here is a 180-residue protein sequence, read N- to C-terminus: Large ribosomal subunit protein uL5 (180 aa).

It belongs to the universal ribosomal protein uL5 family. In terms of assembly, part of the 50S ribosomal subunit; part of the 5S rRNA/L5/L18/L25 subcomplex. Contacts the 5S rRNA and the P site tRNA. Forms a bridge to the 30S subunit in the 70S ribosome.

In terms of biological role, this is one of the proteins that bind and probably mediate the attachment of the 5S RNA into the large ribosomal subunit, where it forms part of the central protuberance. In the 70S ribosome it contacts protein S13 of the 30S subunit (bridge B1b), connecting the 2 subunits; this bridge is implicated in subunit movement. Contacts the P site tRNA; the 5S rRNA and some of its associated proteins might help stabilize positioning of ribosome-bound tRNAs. The polypeptide is Large ribosomal subunit protein uL5 (Xanthomonas axonopodis pv. citri (strain 306)).